The sequence spans 295 residues: Mycothiol acetyltransferase (295 aa).

2 consecutive N-acetyltransferase domains span residues 5–141 (VEIR…TPLP) and 149–295 (VRLR…MYRR). Glu-35 is a 1D-myo-inositol 2-(L-cysteinylamino)-2-deoxy-alpha-D-glucopyranoside binding site. 76-78 (LVV) provides a ligand contact to acetyl-CoA. Residues Glu-176, Lys-215, and Glu-229 each coordinate 1D-myo-inositol 2-(L-cysteinylamino)-2-deoxy-alpha-D-glucopyranoside. Residues 233 to 235 (VGV) and 240 to 246 (RGTGLGR) each bind acetyl-CoA. 1D-myo-inositol 2-(L-cysteinylamino)-2-deoxy-alpha-D-glucopyranoside is bound at residue Tyr-267. An acetyl-CoA-binding site is contributed by 272–277 (NTAAVR).

It belongs to the acetyltransferase family. MshD subfamily. Monomer.

It catalyses the reaction 1D-myo-inositol 2-(L-cysteinylamino)-2-deoxy-alpha-D-glucopyranoside + acetyl-CoA = mycothiol + CoA + H(+). Its function is as follows. Catalyzes the transfer of acetyl from acetyl-CoA to desacetylmycothiol (Cys-GlcN-Ins) to form mycothiol. This chain is Mycothiol acetyltransferase, found in Thermobispora bispora (strain ATCC 19993 / DSM 43833 / CBS 139.67 / JCM 10125 / KCTC 9307 / NBRC 14880 / R51).